The chain runs to 162 residues: Troponin C, skeletal muscle (162 aa).

Alanine 1 is modified (N-acetylalanine). 4 consecutive EF-hand domains span residues 17–52 (EMIA…LGQT), 53–88 (PTKE…QMKE), 93–128 (KSEE…SGES), and 129–162 (ITDE…EGVQ). Ca(2+) contacts are provided by aspartate 30, aspartate 32, aspartate 36, glutamate 41, aspartate 66, aspartate 68, serine 70, threonine 72, glutamate 77, aspartate 106, asparagine 108, aspartate 110, tyrosine 112, glutamate 117, aspartate 142, asparagine 144, aspartate 146, lysine 148, and glutamate 153.

This sequence belongs to the troponin C family.

Its function is as follows. Troponin is the central regulatory protein of striated muscle contraction. Tn consists of three components: Tn-I which is the inhibitor of actomyosin ATPase, Tn-T which contains the binding site for tropomyosin and Tn-C. The binding of calcium to Tn-C abolishes the inhibitory action of Tn on actin filaments. The polypeptide is Troponin C, skeletal muscle (Pelophylax lessonae (Pool frog)).